Reading from the N-terminus, the 559-residue chain is NXPE family member 3 (559 aa).

An N-terminal signal peptide occupies residues M1–V30. N-linked (GlcNAc...) asparagine glycans are attached at residues N237, N292, and N346.

It belongs to the NXPE family.

It localises to the secreted. This Homo sapiens (Human) protein is NXPE family member 3 (NXPE3).